A 389-amino-acid polypeptide reads, in one-letter code: Chalcone synthase 2 (389 aa).

55 to 62 (KFQRMCDK) lines the CoA pocket. Catalysis depends on Cys-164, which acts as the Acyl-thioester intermediate. Substrate contacts are provided by residues Thr-197 and 216–217 (GD). Ala-308 contacts CoA.

The protein belongs to the thiolase-like superfamily. Chalcone/stilbene synthases family. As to quaternary structure, homodimer.

The catalysed reaction is (E)-4-coumaroyl-CoA + 3 malonyl-CoA + 3 H(+) = 2',4,4',6'-tetrahydroxychalcone + 3 CO2 + 4 CoA. It participates in secondary metabolite biosynthesis; flavonoid biosynthesis. In terms of biological role, the primary product of this enzyme is 4,2',4',6'-tetrahydroxychalcone (also termed naringenin-chalcone or chalcone) which can under specific conditions spontaneously isomerize into naringenin. The protein is Chalcone synthase 2 (CHS2) of Medicago sativa (Alfalfa).